A 1132-amino-acid polypeptide reads, in one-letter code: Eisosome protein SEG2 (1132 aa).

Positions 76-95 (KRTSSLPNQGHKNTSNNSAG) are enriched in polar residues. 2 disordered regions span residues 76–142 (KRTS…GNSG) and 171–225 (RYSL…NDYH). A compositionally biased stretch (basic and acidic residues) spans 101–113 (AHEDAETTFREFG). The segment covering 115–142 (KQSSKVLNISSSTGQNSKSRTTSLGNSG) has biased composition (polar residues). Ser-137 is modified (phosphoserine). Residues 208–225 (GSQEKKSESGGKSKNDYH) are compositionally biased toward basic and acidic residues. Ser-280 is subject to Phosphoserine. The interval 404–429 (PTLSEPKPAYVPPEDVEKEPSTLSNQ) is disordered. Phosphoserine is present on residues Ser-504 and Ser-507. Disordered stretches follow at residues 510 to 938 (GGNQ…FRSM) and 961 to 993 (EKKEKGGHVSRKSWTFGLPSPLKRRTSHSTHTT). Lys-526 is covalently cross-linked (Glycyl lysine isopeptide (Lys-Gly) (interchain with G-Cter in ubiquitin)). Acidic residues-rich tracts occupy residues 550–561 (DQEEALSDNEPE) and 595–644 (KDDD…DDEY). At Ser-556 the chain carries Phosphoserine. Composition is skewed to polar residues over residues 688–699 (SENAEVSQSGTN) and 710–735 (YLTNTSSDTFSLDSENVNSKSSTDTT). Lys-743 is covalently cross-linked (Glycyl lysine isopeptide (Lys-Gly) (interchain with G-Cter in ubiquitin)). Residues 761 to 773 (SSTSSSIYSIETS) are compositionally biased toward low complexity. 2 stretches are compositionally biased toward polar residues: residues 774-810 (PNIDSSTGKTASNTKTNSHGPPTSISKQKYDQSSSHQ) and 827-845 (NRSCLRTLRGSSNEATLSH). The segment covering 850–860 (PASDSSSSPPY) has biased composition (low complexity). Over residues 916-930 (PPARKSSFEKERPAK) the composition is skewed to basic and acidic residues. Ser-980 and Ser-1022 each carry phosphoserine.

Belongs to the SEG1 family. Component of eisosomes, large cytoplasmic protein assemblies that localize to specialized domains termed MCCs on the plasma membrane.

It localises to the cell membrane. Its function is as follows. Likely plays only a minor role in eisosome assembly. In Saccharomyces cerevisiae (strain ATCC 204508 / S288c) (Baker's yeast), this protein is Eisosome protein SEG2 (SEG2).